A 323-amino-acid chain; its full sequence is Pantothenate kinase (323 aa).

A compositionally biased stretch (polar residues) spans 1–12 (MAEQNAASTTGV). Residues 1 to 24 (MAEQNAASTTGVKPSPRTPDFSPY) form a disordered region. An ATP-binding site is contributed by 108 to 115 (GSVAVGKS).

The protein belongs to the prokaryotic pantothenate kinase family.

The protein localises to the cytoplasm. The catalysed reaction is (R)-pantothenate + ATP = (R)-4'-phosphopantothenate + ADP + H(+). The protein operates within cofactor biosynthesis; coenzyme A biosynthesis; CoA from (R)-pantothenate: step 1/5. In Corynebacterium glutamicum (strain R), this protein is Pantothenate kinase.